The following is a 593-amino-acid chain: Chromodomain Y-like protein (593 aa).

Residues 1 to 14 are compositionally biased toward polar residues; it reads MGIGNSQPNSQEAQ. Residues 1-30 are disordered; sequence MGIGNSQPNSQEAQLCTLPEKAEQPTDDNT. A Chromo domain is found at 56 to 116; sequence TQVESIVDKR…RHNERQKEGS (61 aa). Residues 56–304 are interaction with EZH2; sequence TQVESIVDKR…TIQTSVTGVT (249 aa). Serine 83 carries the phosphoserine modification. The tract at residues 110–158 is disordered; that stretch reads ERQKEGSLARASRASPSNARKQISRSTHSTLSKTNSKALVVGKDHESKS. Positions 117–129 are enriched in low complexity; the sequence is LARASRASPSNAR. An N6,N6,N6-trimethyllysine; by EHMT2; alternate modification is found at lysine 130. N6,N6-dimethyllysine; by EHMT2; alternate is present on lysine 130. Residue lysine 130 is modified to N6-methyllysine; by EHMT2; alternate. Residues 133–146 show a composition bias toward polar residues; the sequence is SRSTHSTLSKTNSK. Phosphoserine occurs at positions 165, 196, and 211. Residues 200 to 223 form a disordered region; it reads GRTSVDGFQGESPEKLDPVDQGAE. The segment at 357–589 is acetyl-CoA-binding domain; sequence SENNSLNPEV…DSMLKYLQRK (233 aa).

As to quaternary structure, forms multimers and multimerization is required for stable binding to chromatin. Interacts with HDAC1 and HDAC2 via its C-terminal acetyl-CoA-binding domain. Interacts with EZH2, EED, SUZ12, REST, EHMT1 and EHMT2. Part of a complex containing at least CDYL, REST, WIZ, SETB1, EHMT1 and EHMT2. Part of a complex containing at least CDYL, MIER1, MIER2, HDAC1 and HDAC2. Interacts with CHAF1A and CHAF1B; bridging the CAF-1 complex to the MCM2-7 (MCM) complex. Interacts with MCM3 and MCM5; bridging the CAF-1 complex to the MCM2-7 (MCM) complex. Interacts with EHMT2 and PRDM9; interaction only takes place when PRDM9 is bound to hotspot DNA. In terms of tissue distribution, highly expressed in testis (at protein level). Expressed in the hippocampus (at protein level). Expressed in the medial prefrontal cortex, prelimbic cortex, intralimbic cortex and cingulate cortex area (at protein level). Isoform 1: Expressed as 2 transcripts encoding the same protein, a ubiquitous transcript and a highly expressed testis-specific transcript.

It localises to the nucleus. It is found in the chromosome. The catalysed reaction is L-lysyl-[protein] + acetyl-CoA = N(6)-acetyl-L-lysyl-[protein] + CoA + H(+). It catalyses the reaction 3-hydroxybutanoyl-CoA = (2E)-butenoyl-CoA + H2O. Chromatin reader protein that recognizes and binds histone H3 trimethylated at 'Lys-9', dimethylated at 'Lys-27' and trimethylated at 'Lys-27' (H3K9me3, H3K27me2 and H3K27me3, respectively). Part of multimeric repressive chromatin complexes, where it is required for transmission and restoration of repressive histone marks, thereby preserving the epigenetic landscape. Required for chromatin targeting and maximal enzymatic activity of Polycomb repressive complex 2 (PRC2); acts as a positive regulator of PRC2 activity by bridging the pre-existing histone H3K27me3 and newly recruited PRC2 on neighboring nucleosomes. Acts as a corepressor for REST by facilitating histone-lysine N-methyltransferase EHMT2 recruitment and H3K9 dimethylation at REST target genes for repression. Involved in X chromosome inactivation in females: recruited to Xist RNA-coated X chromosome and facilitates propagation of H3K9me2 by anchoring EHMT2. Promotes EZH2 accumulation and H3K27me3 methylation at DNA double strand breaks (DSBs), thereby facilitating transcriptional repression at sites of DNA damage and homology-directed repair of DSBs. Required for neuronal migration during brain development by repressing expression of RHOA. By repressing the expression of SCN8A, contributes to the inhibition of intrinsic neuronal excitability and epileptogenesis. In addition to acting as a chromatin reader, acts as a hydro-lyase. Shows crotonyl-coA hydratase activity by mediating the conversion of crotonyl-CoA ((2E)-butenoyl-CoA) to beta-hydroxybutyryl-CoA (3-hydroxybutanoyl-CoA), thereby acting as a negative regulator of histone crotonylation. Histone crotonylation is required during spermatogenesis; down-regulation of histone crotonylation by CDYL regulates the reactivation of sex chromosome-linked genes in round spermatids and histone replacement in elongating spermatids. By regulating histone crotonylation and trimethylation of H3K27, may be involved in stress-induced depression-like behaviors, possibly by regulating VGF expression. May have histone acetyltransferase activity; such activity is however unsure in vivo. In terms of biological role, not able to recognize and bind histone H3K9me3, histone H3K27me2 and histone H3K27me3, due to the presence of a N-terminal extension that inactivates the chromo domain. The sequence is that of Chromodomain Y-like protein from Mus musculus (Mouse).